Consider the following 59-residue polypeptide: Large ribosomal subunit protein uL30 (59 aa).

The protein belongs to the universal ribosomal protein uL30 family. As to quaternary structure, part of the 50S ribosomal subunit.

The sequence is that of Large ribosomal subunit protein uL30 from Pelotomaculum thermopropionicum (strain DSM 13744 / JCM 10971 / SI).